Reading from the N-terminus, the 648-residue chain is DNA mismatch repair protein MutL (648 aa).

The interval 385-430 (STVKGPAVNEPLTENTLNQQKVKTSASTPVVHTGNSVEPKPETSTA) is disordered. Residues 396-430 (LTENTLNQQKVKTSASTPVVHTGNSVEPKPETSTA) show a composition bias toward polar residues.

The protein belongs to the DNA mismatch repair MutL/HexB family.

Functionally, this protein is involved in the repair of mismatches in DNA. It is required for dam-dependent methyl-directed DNA mismatch repair. May act as a 'molecular matchmaker', a protein that promotes the formation of a stable complex between two or more DNA-binding proteins in an ATP-dependent manner without itself being part of a final effector complex. The protein is DNA mismatch repair protein MutL of Agathobacter rectalis (strain ATCC 33656 / DSM 3377 / JCM 17463 / KCTC 5835 / VPI 0990) (Eubacterium rectale).